Here is a 432-residue protein sequence, read N- to C-terminus: Cysteine desulfurase, mitosomal (432 aa).

Residues 102–103 (AT), Gln212, and 232–234 (CAH) each bind pyridoxal 5'-phosphate. At Lys235 the chain carries N6-(pyridoxal phosphate)lysine. Thr272 is a pyridoxal 5'-phosphate binding site. Residue Cys357 is the Cysteine persulfide intermediate of the active site. Cys357 lines the [2Fe-2S] cluster pocket.

This sequence belongs to the class-V pyridoxal-phosphate-dependent aminotransferase family. NifS/IscS subfamily. Requires pyridoxal 5'-phosphate as cofactor.

The protein localises to the mitosome. The catalysed reaction is (sulfur carrier)-H + L-cysteine = (sulfur carrier)-SH + L-alanine. Catalyzes the removal of elemental sulfur from cysteine to produce alanine. It supplies the inorganic sulfur for iron-sulfur (Fe-S) clusters in mitosomes. This chain is Cysteine desulfurase, mitosomal, found in Encephalitozoon cuniculi (strain GB-M1) (Microsporidian parasite).